We begin with the raw amino-acid sequence, 237 residues long: Placenta-expressed transcript 1 protein (237 aa).

A signal peptide spans 1-27; sequence MLSLRSLLPHLGLFLCLALHLSPSLSA. Residues Asn30, Asn67, Asn103, and Asn136 are each glycosylated (N-linked (GlcNAc...) asparagine). Polar residues predominate over residues 145–162; it reads KMEQVQPSASTPIPESSE. Residues 145–170 form a disordered region; it reads KMEQVQPSASTPIPESSETSQTINTT. Ser218 is lipidated: GPI-anchor amidated serine. The propeptide at 219-237 is removed in mature form; that stretch reads PLAGALHILLVFLISKLLF.

Post-translationally, N-glycosylated. In terms of processing, GPI-anchored. In terms of tissue distribution, present in hair follicle cells and sebaceous gland of skin, ciliated epithelial cells of trachea and bronchial tube, striated portion of submandibular gland, distal convoluted tubule cells of kidney, ciliated epithelial cells of oviduct, medulla of adrenal gland and anterior lobe of pituitary gland. Expressed in keratinocytes of the hair follicle at the trichilemmal zone corresponding to the terminally differentiated outermost suprabasal outer root sheath (ORS), including that of the sebaceous gland duct (SGD) and the directly adjacent upper distal end of the companion layer (CL). Expression is similar in all hair follicle growth stages. Also detected during both the early and late anagen phases above the bulge of stem cells. Expressed at the leading edge of the epidermal wound. Not expressed in the interfollicular epidermis (IFE), inner root sheath (IRS) and hair fiber. Highly expressed in placenta. Detected in mammary and prostate epithelia and in the pancreas (at protein level).

It is found in the apical cell membrane. Its function is as follows. Modulates leading keratinocyte migration and cellular adhesion to matrix proteins during a wound-healing response and promotes wound repair. May play a role during trichilemmal differentiation of the hair follicle. The sequence is that of Placenta-expressed transcript 1 protein (Plet1) from Mus musculus (Mouse).